Here is a 377-residue protein sequence, read N- to C-terminus: Succinyl-diaminopimelate desuccinylase (377 aa).

His-66 is a binding site for Zn(2+). Asp-68 is a catalytic residue. Asp-99 contacts Zn(2+). Catalysis depends on Glu-133, which acts as the Proton acceptor. Zn(2+) is bound by residues Glu-134, Glu-162, and His-348.

This sequence belongs to the peptidase M20A family. DapE subfamily. In terms of assembly, homodimer. Zn(2+) serves as cofactor. The cofactor is Co(2+).

The enzyme catalyses N-succinyl-(2S,6S)-2,6-diaminopimelate + H2O = (2S,6S)-2,6-diaminopimelate + succinate. The protein operates within amino-acid biosynthesis; L-lysine biosynthesis via DAP pathway; LL-2,6-diaminopimelate from (S)-tetrahydrodipicolinate (succinylase route): step 3/3. Its function is as follows. Catalyzes the hydrolysis of N-succinyl-L,L-diaminopimelic acid (SDAP), forming succinate and LL-2,6-diaminopimelate (DAP), an intermediate involved in the bacterial biosynthesis of lysine and meso-diaminopimelic acid, an essential component of bacterial cell walls. The protein is Succinyl-diaminopimelate desuccinylase of Xylella fastidiosa (strain M12).